A 655-amino-acid chain; its full sequence is NADH-ubiquinone oxidoreductase chain 5 (655 aa).

A run of 16 helical transmembrane segments spans residues 3–23 (NAIS…LFFG), 34–54 (MTST…YQLL), 84–104 (LTIT…IYSI), 116–136 (FFSL…GSNY), 137–157 (FVLF…ISFW), 180–200 (FFVL…YSTI), 204–224 (AYLI…IAAM), 244–264 (TPVS…YLLL), 276–296 (VLFI…LIAI), 304–322 (IIAL…AIGL), 332–354 (LLGH…HSIL), 370–390 (LPYT…MPGL), 413–433 (VVYW…MKIL), 456–476 (IYIT…GWIL), 516–536 (ISAI…AIVF), and 629–649 (LLLV…LISI).

This sequence belongs to the complex I subunit 5 family. In terms of assembly, complex I is composed of 37 different subunits.

It is found in the mitochondrion inner membrane. It catalyses the reaction a ubiquinone + NADH + 5 H(+)(in) = a ubiquinol + NAD(+) + 4 H(+)(out). Core subunit of the mitochondrial membrane respiratory chain NADH dehydrogenase (Complex I) that is believed to belong to the minimal assembly required for catalysis. Complex I functions in the transfer of electrons from NADH to the respiratory chain. The immediate electron acceptor for the enzyme is believed to be ubiquinone. The sequence is that of NADH-ubiquinone oxidoreductase chain 5 (ND5) from Yarrowia lipolytica (strain CLIB 122 / E 150) (Yeast).